The primary structure comprises 447 residues: Cysteine--tRNA ligase (447 aa).

C28 contacts Zn(2+). The 'HIGH' region signature appears at 30–40; the sequence is PTVYNYIHVGN. Residues C211, H236, and E240 each coordinate Zn(2+). The 'KMSKS' region signature appears at 268-272; that stretch reads KMSKS. Position 271 (K271) interacts with ATP.

It belongs to the class-I aminoacyl-tRNA synthetase family. In terms of assembly, monomer. Zn(2+) serves as cofactor.

It localises to the cytoplasm. It carries out the reaction tRNA(Cys) + L-cysteine + ATP = L-cysteinyl-tRNA(Cys) + AMP + diphosphate. This is Cysteine--tRNA ligase from Streptococcus pneumoniae (strain ATCC BAA-255 / R6).